Reading from the N-terminus, the 193-residue chain is tRNA (cytidine(56)-2'-O)-methyltransferase (193 aa).

S-adenosyl-L-methionine contacts are provided by residues Leu86 and 115-119 (GGEKV).

It belongs to the aTrm56 family. As to quaternary structure, homodimer.

Its subcellular location is the cytoplasm. The catalysed reaction is cytidine(56) in tRNA + S-adenosyl-L-methionine = 2'-O-methylcytidine(56) in tRNA + S-adenosyl-L-homocysteine + H(+). Its function is as follows. Specifically catalyzes the AdoMet-dependent 2'-O-ribose methylation of cytidine at position 56 in tRNAs. The protein is tRNA (cytidine(56)-2'-O)-methyltransferase of Haloquadratum walsbyi (strain DSM 16790 / HBSQ001).